We begin with the raw amino-acid sequence, 239 residues long: MSLMKEMLSAGVHFGHKKAFWNPQMKEYIFGINHGVHIINLEKTVPLFQDAVNFVGKTVANGGKILFVGTKRQAQDIVEAEAKRCGMPFVSHRWLGGMLTNYKTVRQSIKRLAQLEKMREDGTLESLTKKEMLQNIRTIEKLEKVLGGIKEMGGLPDAIVVIDGNKEHIAIQEAQKLGIKVVAIVDTNSNPEGIDYIIPGNDDAVKSISFYMKKFADAVIDAQGLDRAVEAKADEAAQA.

This sequence belongs to the universal ribosomal protein uS2 family.

The polypeptide is Small ribosomal subunit protein uS2 (Francisella tularensis subsp. holarctica (strain FTNF002-00 / FTA)).